A 170-amino-acid chain; its full sequence is Acireductone dioxygenase (170 aa).

The Fe(2+) site is built by histidine 99, histidine 101, glutamate 105, and histidine 144. Histidine 99, histidine 101, glutamate 105, and histidine 144 together coordinate Ni(2+).

The protein belongs to the acireductone dioxygenase (ARD) family. As to quaternary structure, monomer. The cofactor is Fe(2+). Ni(2+) serves as cofactor.

It catalyses the reaction 1,2-dihydroxy-5-(methylsulfanyl)pent-1-en-3-one + O2 = 3-(methylsulfanyl)propanoate + CO + formate + 2 H(+). The catalysed reaction is 1,2-dihydroxy-5-(methylsulfanyl)pent-1-en-3-one + O2 = 4-methylsulfanyl-2-oxobutanoate + formate + 2 H(+). It participates in amino-acid biosynthesis; L-methionine biosynthesis via salvage pathway; L-methionine from S-methyl-5-thio-alpha-D-ribose 1-phosphate: step 5/6. Its function is as follows. Catalyzes 2 different reactions between oxygen and the acireductone 1,2-dihydroxy-3-keto-5-methylthiopentene (DHK-MTPene) depending upon the metal bound in the active site. Fe-containing acireductone dioxygenase (Fe-ARD) produces formate and 2-keto-4-methylthiobutyrate (KMTB), the alpha-ketoacid precursor of methionine in the methionine recycle pathway. Ni-containing acireductone dioxygenase (Ni-ARD) produces methylthiopropionate, carbon monoxide and formate, and does not lie on the methionine recycle pathway. The chain is Acireductone dioxygenase from Bacillus mycoides (strain KBAB4) (Bacillus weihenstephanensis).